The sequence spans 285 residues: Extracellular metalloprotease SMAC_06893 (285 aa).

The N-terminal stretch at 1–18 (MQIKSLLLAAAAAPAALG) is a signal peptide. Zn(2+) is bound at residue histidine 197. Glutamate 198 is a catalytic residue. Position 201 (histidine 201) interacts with Zn(2+). Residues cysteine 233 and cysteine 260 are joined by a disulfide bond. A glycan (N-linked (GlcNAc...) asparagine) is linked at asparagine 282.

The protein belongs to the peptidase M43B family.

The protein localises to the secreted. Its function is as follows. Secreted metalloproteinase that allows assimilation of proteinaceous substrates. The chain is Extracellular metalloprotease SMAC_06893 from Sordaria macrospora (strain ATCC MYA-333 / DSM 997 / K(L3346) / K-hell).